We begin with the raw amino-acid sequence, 832 residues long: Cadherin-17 (832 aa).

A signal peptide spans 1 to 22 (MILQAHLHSLCLLMLYLATGYG). The Extracellular segment spans residues 23–787 (QEGKFSGPLK…HQTGIPTVGM (765 aa)). Cadherin domains lie at 30-128 (PLKP…TFLQ), 129-244 (SKYE…APKP), 245-340 (VEMV…PPTC), 341-449 (PSPV…IPIF), 450-566 (EKSD…APQF), 567-667 (SQHV…PPRL), and 668-777 (AKDY…RPAG). N-linked (GlcNAc...) asparagine glycosylation is found at asparagine 149, asparagine 184, asparagine 250, asparagine 419, asparagine 456, asparagine 546, asparagine 587, and asparagine 722. Residues 788–808 (AVGILLTTLLVIGIILAVVFI) form a helical membrane-spanning segment. Topologically, residues 809-832 (RIKKDKGKDNVESAQASEVKPLRS) are cytoplasmic.

In terms of tissue distribution, expressed in the gastrointestinal tract and pancreatic duct. Not detected in kidney, lung, liver, brain, adrenal gland and skin.

The protein resides in the cell membrane. Its function is as follows. Cadherins are calcium-dependent cell adhesion proteins. They preferentially interact with themselves in a homophilic manner in connecting cells; cadherins may thus contribute to the sorting of heterogeneous cell types. LI-cadherin may have a role in the morphological organization of liver and intestine. Involved in intestinal peptide transport. The protein is Cadherin-17 (CDH17) of Homo sapiens (Human).